The chain runs to 190 residues: Glutathione peroxidase 2 (190 aa).

Selenocysteine 40 is a catalytic residue. Residue selenocysteine 40 is a non-standard amino acid, selenocysteine.

The protein belongs to the glutathione peroxidase family. In terms of assembly, homotetramer.

It localises to the cytoplasm. The protein localises to the cytosol. It catalyses the reaction 2 glutathione + H2O2 = glutathione disulfide + 2 H2O. It carries out the reaction a hydroperoxy polyunsaturated fatty acid + 2 glutathione = a hydroxy polyunsaturated fatty acid + glutathione disulfide + H2O. The catalysed reaction is tert-butyl hydroperoxide + 2 glutathione = tert-butanol + glutathione disulfide + H2O. The enzyme catalyses cumene hydroperoxide + 2 glutathione = 2-phenylpropan-2-ol + glutathione disulfide + H2O. It catalyses the reaction (13S)-hydroperoxy-(9Z,11E)-octadecadienoate + 2 glutathione = (13S)-hydroxy-(9Z,11E)-octadecadienoate + glutathione disulfide + H2O. It carries out the reaction (5S)-hydroperoxy-(6E,8Z,11Z,14Z)-eicosatetraenoate + 2 glutathione = (5S)-hydroxy-(6E,8Z,11Z,14Z)-eicosatetraenoate + glutathione disulfide + H2O. The catalysed reaction is (12R)-hydroperoxy-(5Z,8Z,10E,14Z)-eicosatetraenoate + 2 glutathione = (12R)-hydroxy-(5Z,8Z,10E,14Z)-eicosatetraenoate + glutathione disulfide + H2O. The enzyme catalyses (15S)-hydroperoxy-(5Z,8Z,11Z,13E)-eicosatetraenoate + 2 glutathione = (15S)-hydroxy-(5Z,8Z,11Z,13E)-eicosatetraenoate + glutathione disulfide + H2O. Functionally, catalyzes the reduction of hydroperoxides in a glutathione-dependent manner thus regulating cellular redox homeostasis. Can reduce small soluble hydroperoxides such as H2O2, cumene hydroperoxide and tert-butyl hydroperoxide, as well as several fatty acid-derived hydroperoxides. Cannot reduce phosphatidycholine hydroperoxide. The sequence is that of Glutathione peroxidase 2 (GPX2) from Callithrix jacchus (White-tufted-ear marmoset).